A 123-amino-acid chain; its full sequence is Thioredoxin domain-containing protein 17 (123 aa).

Ala2 is subject to N-acetylalanine. In terms of domain architecture, Thioredoxin spans 41-123 (SWCPDCVEAE…SLVEMIFSED (83 aa)). Residues Cys43 and Cys46 each act as nucleophile in the active site. A disulfide bridge connects residues Cys43 and Cys46.

This sequence belongs to the thioredoxin family. Interacts with TRXR1 and DYNLL1/DNCL1. Post-translationally, the oxidized protein is reduced by TRXR1.

Its subcellular location is the cytoplasm. Disulfide reductase. May participate in various redox reactions through the reversible oxidation of its active center dithiol to a disulfide and catalyze dithiol-disulfide exchange reactions. Modulates TNF-alpha signaling and NF-kappa-B activation. Has peroxidase activity and may contribute to the elimination of cellular hydrogen peroxide. The protein is Thioredoxin domain-containing protein 17 (Txndc17) of Mus musculus (Mouse).